Reading from the N-terminus, the 401-residue chain is Propionate kinase (401 aa).

Positions 11 and 18 each coordinate ATP. Asn-11 contacts Mg(2+). Residue Arg-86 coordinates substrate. Asp-143 acts as the Proton donor/acceptor in catalysis. Residues His-175, 203-207, 278-280, and 326-330 contribute to the ATP site; these read HLGNG, DLR, and GIGEN.

It belongs to the acetokinase family. TdcD subfamily. Homodimer. The cofactor is Mg(2+).

It carries out the reaction propanoate + ATP = propanoyl phosphate + ADP. It functions in the pathway amino-acid degradation; L-threonine degradation via propanoate pathway; propanoate from L-threonine: step 4/4. In terms of biological role, catalyzes the conversion of propionyl phosphate and ADP to propionate and ATP. This chain is Propionate kinase, found in Klebsiella pneumoniae (strain 342).